Consider the following 702-residue polypeptide: Cadmium, zinc and cobalt-transporting ATPase (702 aa).

Residues 1–86 (MRLVKQEYVL…HIKKSADDGY (86 aa)) are Cytoplasmic-facing. The region spanning 4-72 (VKQEYVLDGL…KVKSIDPHVT (69 aa)) is the HMA domain. The Cd(2+) site is built by cysteine 15 and cysteine 18. 2 residues coordinate Co(2+): cysteine 15 and cysteine 18. Cysteine 15 and cysteine 18 together coordinate Zn(2+). Residues 87-107 (RNRMVNMLIRMAAAVILGAAA) traverse the membrane as a helical segment. Residues 108 to 116 (YLVQSGTIE) lie on the Extracellular side of the membrane. A helical membrane pass occupies residues 117 to 136 (FFLFLGAYLIIGGDIIIRAV). Residues 137–143 (KNIIRGQ) lie on the Cytoplasmic side of the membrane. The chain crosses the membrane as a helical span at residues 144-163 (VFDEHFLMALATIGAFLIQQ). The Extracellular portion of the chain corresponds to 164–166 (YPE). The chain crosses the membrane as a helical span at residues 167–186 (GVAVMLFYQIGELFQGAAVS). The Cytoplasmic segment spans residues 187–320 (RSRKSISALM…ITKFAKYYTP (134 aa)). A helical membrane pass occupies residues 321–339 (AVVIIAVLLAFVPPLVLSG). The Extracellular portion of the chain corresponds to 340–345 (AALSDW). Residues 346–363 (VYRALIFLVISCPCALVV) traverse the membrane as a helical segment. At 364 to 648 (SIPLGFFGGI…AIRIAKRTRR (285 aa)) the chain is on the cytoplasmic side. Catalysis depends on aspartate 401, which acts as the 4-aspartylphosphate intermediate. 2 residues coordinate Mg(2+): aspartate 595 and aspartate 599. The chain crosses the membrane as a helical span at residues 649–670 (IVWQNIGFALGVKAIFLILGAF). The Extracellular segment spans residues 671–678 (GIATMWEA). The helical transmembrane segment at 679 to 694 (VFSDVGVTLLAVANAM) threads the bilayer. Residues 695 to 702 (RVMRLKNK) lie on the Cytoplasmic side of the membrane.

The protein belongs to the cation transport ATPase (P-type) (TC 3.A.3) family. Type IB subfamily.

The protein localises to the cell membrane. It catalyses the reaction Zn(2+)(in) + ATP + H2O = Zn(2+)(out) + ADP + phosphate + H(+). The enzyme catalyses Cd(2+)(in) + ATP + H2O = Cd(2+)(out) + ADP + phosphate + H(+). In terms of biological role, couples the hydrolysis of ATP with the transport of cadmium, zinc and cobalt out of the cell. Does not seem to transport copper. The sequence is that of Cadmium, zinc and cobalt-transporting ATPase (cadA) from Bacillus subtilis (strain 168).